The primary structure comprises 326 residues: DNA-directed RNA polymerase subunit alpha (326 aa).

Residues 1–232 form an alpha N-terminal domain (alpha-NTD) region; the sequence is MQGSARDFLK…EQLSSFVELE (232 aa). Positions 246 to 326 are alpha C-terminal domain (alpha-CTD); sequence FDPQLLAAVD…NWPPVDLMSE (81 aa).

This sequence belongs to the RNA polymerase alpha chain family. In terms of assembly, homodimer. The RNAP catalytic core consists of 2 alpha, 1 beta, 1 beta' and 1 omega subunit. When a sigma factor is associated with the core the holoenzyme is formed, which can initiate transcription.

The enzyme catalyses RNA(n) + a ribonucleoside 5'-triphosphate = RNA(n+1) + diphosphate. In terms of biological role, DNA-dependent RNA polymerase catalyzes the transcription of DNA into RNA using the four ribonucleoside triphosphates as substrates. The sequence is that of DNA-directed RNA polymerase subunit alpha from Vesicomyosocius okutanii subsp. Calyptogena okutanii (strain HA).